The sequence spans 46 residues: Photosystem II reaction center protein K (46 aa).

The propeptide occupies 1–9 (MTTLALVLA). Residues 18–38 (FAPIVDVLPVIPVFFILLAFV) traverse the membrane as a helical segment.

It belongs to the PsbK family. In terms of assembly, PSII is composed of 1 copy each of membrane proteins PsbA, PsbB, PsbC, PsbD, PsbE, PsbF, PsbH, PsbI, PsbJ, PsbK, PsbL, PsbM, PsbT, PsbX, PsbY, PsbZ, Psb30/Ycf12, at least 3 peripheral proteins of the oxygen-evolving complex and a large number of cofactors. It forms dimeric complexes. This protein is tightly associated with CP43 (psbC), one of the core proteins.

The protein resides in the plastid. It is found in the chloroplast thylakoid membrane. Its function is as follows. One of the components of the core complex of photosystem II (PSII). PSII is a light-driven water:plastoquinone oxidoreductase that uses light energy to abstract electrons from H(2)O, generating O(2) and a proton gradient subsequently used for ATP formation. It consists of a core antenna complex that captures photons, and an electron transfer chain that converts photonic excitation into a charge separation. Required for assembly and/or stability of PSII. This is Photosystem II reaction center protein K from Chlamydomonas reinhardtii (Chlamydomonas smithii).